Consider the following 302-residue polypeptide: Probable alpha-L-glutamate ligase (302 aa).

In terms of domain architecture, ATP-grasp spans 104–287 (LQLLSRKGLG…IAGQIIEYIE (184 aa)). ATP contacts are provided by residues Lys141, 178–179 (EY), Asp187, and 211–213 (RSN). The Mg(2+) site is built by Asp248, Glu260, and Asn262. 3 residues coordinate Mn(2+): Asp248, Glu260, and Asn262.

The protein belongs to the RimK family. Requires Mg(2+) as cofactor. It depends on Mn(2+) as a cofactor.

The polypeptide is Probable alpha-L-glutamate ligase (Chromohalobacter salexigens (strain ATCC BAA-138 / DSM 3043 / CIP 106854 / NCIMB 13768 / 1H11)).